The following is a 260-amino-acid chain: Enoyl-[acyl-carrier-protein] reductase [NADH] FabI (260 aa).

Residues Gly-15, 21–22 (SI), Gln-42, 66–67 (DV), and Met-94 contribute to the NAD(+) site. Residue Ala-97 participates in substrate binding. Catalysis depends on proton acceptor residues Tyr-147 and Tyr-157. NAD(+) is bound by residues Lys-164 and 193 to 197 (IKTLA).

Belongs to the short-chain dehydrogenases/reductases (SDR) family. FabI subfamily. As to quaternary structure, homotetramer.

The catalysed reaction is a 2,3-saturated acyl-[ACP] + NAD(+) = a (2E)-enoyl-[ACP] + NADH + H(+). Its pathway is lipid metabolism; fatty acid biosynthesis. In terms of biological role, catalyzes the reduction of a carbon-carbon double bond in an enoyl moiety that is covalently linked to an acyl carrier protein (ACP). Involved in the elongation cycle of fatty acid which are used in the lipid metabolism. The protein is Enoyl-[acyl-carrier-protein] reductase [NADH] FabI (fabI) of Rickettsia felis (strain ATCC VR-1525 / URRWXCal2) (Rickettsia azadi).